Consider the following 179-residue polypeptide: Insulin-like growth factor 2 (179 aa).

A signal peptide spans 1 to 24 (MGITAGKSVLVLLAFLAFASCCYA). Residues 25-52 (AYRPSETLCGGELVDTLQFVCGDRGFYF) form a b region. 3 disulfide bridges follow: cysteine 33–cysteine 71, cysteine 45–cysteine 84, and cysteine 70–cysteine 75. Residues 53 to 64 (SRPSSRINRRSR) are c. The segment at 65–85 (GIVEECCFRSCDLALLETYCA) is a. The d stretch occupies residues 86 to 91 (TPAKSE). A propeptide spans 92-179 (RDVSASTTVL…GGASSKASSD (88 aa)) (e peptide). O-linked (GalNAc...) threonine glycosylation occurs at threonine 106. Serine 154 carries an O-linked (GalNAc...) serine glycan. The segment at 160-179 (ALPTQDPATHGGASSKASSD) is disordered. O-linked (GalNAc...) threonine glycosylation is present at threonine 163.

It belongs to the insulin family. As to quaternary structure, interacts with MYORG; this interaction is required for IGF2 secretion. Interacts with integrins ITGAV:ITGB3 and ITGA6:ITGB4; integrin-binding is required for IGF2 signaling. Interacts with IGFBP2. In terms of processing, proteolytically processed by PCSK4, proIGF2 is cleaved at Arg-128 and Arg-92 to generate big-IGF2 and mature IGF2.

It is found in the secreted. The insulin-like growth factors possess growth-promoting activity. Major fetal growth hormone in mammals. Plays a key role in regulating fetoplacental development. IGF2 is influenced by placental lactogen. Also involved in tissue differentiation. In adults, involved in glucose metabolism in adipose tissue, skeletal muscle and liver. Acts as a ligand for integrin which is required for IGF2 signaling. Positively regulates myogenic transcription factor MYOD1 function by facilitating the recruitment of transcriptional coactivators, thereby controlling muscle terminal differentiation. Inhibits myoblast differentiation and modulates metabolism via increasing the mitochondrial respiration rate. Its function is as follows. Preptin undergoes glucose-mediated co-secretion with insulin, and acts as a physiological amplifier of glucose-mediated insulin secretion. Exhibits osteogenic properties by increasing osteoblast mitogenic activity through phosphoactivation of MAPK1 and MAPK3. The sequence is that of Insulin-like growth factor 2 from Bos taurus (Bovine).